Consider the following 307-residue polypeptide: MAEENKILVTHFVLTGLTDHPGLQAPLFLVFLVIYLITLVGNLGLMALIWKDPHLHTPIYLFLGSLAFADACTSSSVTSKMLINFLSKNHMLSMAKCATQFYFFGSNATTECFLLVVMAYDRYVAICNPLLYPVVMSNSLCTQFIGISYFIGFLHSAIHVGLLFRLTFCRSNIIHYFYCEILQLFKISCTNPTVNILLIFIFSAFIQVFTFMTLIVSYSYILSAILKKKSEKGRSKAFSTCSAHLLSVSLFYGTLFFMYVSSRSGSAADQAKMYSLFYTIIIPLLNPFIYSLRNKEVIDALRRIMKK.

Over Met1–Phe28 the chain is Extracellular. The chain crosses the membrane as a helical span at residues Leu29–Ile49. At Trp50–His56 the chain is on the cytoplasmic side. A helical membrane pass occupies residues Thr57–Val77. At Thr78–Thr99 the chain is on the extracellular side. The cysteines at positions 97 and 179 are disulfide-linked. The chain crosses the membrane as a helical span at residues Gln100 to Tyr120. The Cytoplasmic segment spans residues Asp121–Gln143. Residues Phe144–Phe164 form a helical membrane-spanning segment. At Arg165–Asn195 the chain is on the extracellular side. Residues Ile196–Val216 form a helical membrane-spanning segment. The Cytoplasmic portion of the chain corresponds to Ser217–Ser239. The chain crosses the membrane as a helical span at residues Thr240–Val260. The Extracellular portion of the chain corresponds to Ser261–Ala271. A helical membrane pass occupies residues Lys272–Leu292. Topologically, residues Arg293–Lys307 are cytoplasmic.

Belongs to the G-protein coupled receptor 1 family.

It localises to the cell membrane. Its function is as follows. Odorant receptor. In Homo sapiens (Human), this protein is Olfactory receptor 5AC1 (OR5AC1).